The chain runs to 1350 residues: Protein transport protein SEC16A homolog (1350 aa).

Disordered stretches follow at residues 26–45 (YTPT…GSDS), 73–97 (LGND…SIAP), 964–1063 (MPPP…TRKV), 1118–1216 (AEEA…KPPI), and 1235–1350 (QVME…EVEL). The span at 35–45 (KELKFDDGSDS) shows a compositional bias: basic and acidic residues. Ser43 is modified (phosphoserine). Positions 970 to 1002 (HSTTGNPQVNEYQHQQQEAAKLSYSQSANTMSS) are enriched in polar residues. A compositionally biased stretch (low complexity) spans 1150 to 1168 (SPSSGSWSSGSPTPSENSP). Polar residues-rich tracts occupy residues 1195 to 1210 (TYNQ…PPVQ) and 1289 to 1316 (RSGS…GSVN). A compositionally biased stretch (low complexity) spans 1317–1343 (SSSFMSPTSASTFRPSPLNSSSSSLGE).

The protein belongs to the SEC16 family. In terms of assembly, interacts with SEC13A, SEC13B and SEC31A.

It is found in the golgi apparatus. It localises to the golgi stack. Its subcellular location is the endoplasmic reticulum. In terms of biological role, required for efficient protein export from the endoplasmic reticulum (ER) to the Golgi by regulating COPII coat dynamics at the ER. Functions as a scaffold and regulator of COPII coat assembly at ER exit sites. The protein is Protein transport protein SEC16A homolog of Arabidopsis thaliana (Mouse-ear cress).